A 707-amino-acid polypeptide reads, in one-letter code: B-cell lymphoma 6 protein homolog (707 aa).

One can recognise a BTB domain in the interval 32–99 (TDVVIVVSRE…MYTSRLNLRE (68 aa)). Positions 275-350 (HYSVPEGPKP…QPNSPTESCS (76 aa)) are disordered. A compositionally biased stretch (basic and acidic residues) spans 299–315 (KASKEEERPSSEDEIAL). Over residues 331–350 (SPQSPQKSDCQPNSPTESCS) the composition is skewed to polar residues. Residue serine 334 is modified to Phosphoserine. At serine 344 the chain carries Phosphoserine; by MAPK1. Phosphoserine is present on serine 362. Residues 377–380 (KKYK) form a required for interaction with NuRD complex and for transcriptional repressor activity region. Lysine 380 is modified (N6-acetyllysine; by EP300). Serine 405 carries the phosphoserine modification. Positions 405-469 (SPRAYPAPPA…RSSSESHSPL (65 aa)) are disordered. The span at 409–420 (YPAPPACQPPME) shows a compositional bias: pro residues. Positions 425–452 (DLQSPTKLSASGEDSTIPQASRLNNLVN) are enriched in polar residues. Low complexity predominate over residues 458–467 (SPRSSSESHS). 6 consecutive C2H2-type zinc fingers follow at residues 519–542 (FFCN…LQTH), 547–569 (YKCD…KTVH), 575–597 (YRCN…TRIH), 603–625 (YKCE…VLIH), 631–653 (YPCE…LRIH), and 659–682 (YHCE…RQKH).

In terms of assembly, homodimer. Interacts (via BTB domain) with the corepressors BCOR, NCOR1 and SMRT/NCOR2; the interactions are direct. Forms preferably ternary complexes with BCOR and SMRT/NCOR2 on target gene promoters but, on enhancer elements, interacts with SMRT/NCOR2 and HDAC3 to repress proximal gene expression. Interacts with histone deacetylases HDAC2, HDAC5 and HDAC9 (via the catalytic domain). Interacts with ZBTB7 and BCL6B. Interacts with SCF(FBXO11) complex; the interaction is independent of phosphorylation and promotes ubiquitination. Interacts (when phosphorylated) with PIN1; the interaction is required for BCL6 degradation upon genotoxic stress. Interacts with ZBTB17; inhibits ZBTB17 transcriptional activity. Interacts with CTBP1, autoinhibits its transcriptional expression. Interacts with NOTCH1 NCID and SIRT1; leads to a epigenetic repression of selective NOTCH1-target genes. Interacts (nor via BTB domain neither acetylated) with the NuRD complex components CHD4, HDAC1, MBD3 and MTA3; the interaction with MTA3 inhibits BCL6 acetylation and is required for BCL6 transpriptional repression. Post-translationally, phosphorylated by MAPK1 in response to antigen receptor activation at Ser-334 and Ser-344. Phosphorylated by ATM in response to genotoxic stress. Phosphorylation induces its degradation by ubiquitin/proteasome pathway. In terms of processing, polyubiquitinated. Polyubiquitinated by SCF(FBXO11), leading to its degradation by the proteasome. Ubiquitinated by the SCF(FBXL17) complex, leading to its degradation by the proteasome: ubiquitination by the SCF(FBXL17) complex takes place when aberrant BTB domain dimers are formed. Acetylated at Lys-380 by EP300 which inhibits the interaction with NuRD complex and the transcriptional repressor function. Deacetylated by HDAC- and SIR2-dependent pathways. In terms of tissue distribution, expressed at least in germinal center B-cells of spleen.

Its subcellular location is the nucleus. In terms of biological role, transcriptional repressor mainly required for germinal center (GC) formation and antibody affinity maturation which has different mechanisms of action specific to the lineage and biological functions. Forms complexes with different corepressors and histone deacetylases to repress the transcriptional expression of different subsets of target genes. Represses its target genes by binding directly to the DNA sequence 5'-TTCCTAGAA-3' (BCL6-binding site) or indirectly by repressing the transcriptional activity of transcription factors. In GC B-cells, represses genes that function in differentiation, inflammation, apoptosis and cell cycle control, also autoregulates its transcriptional expression and up-regulates, indirectly, the expression of some genes important for GC reactions, such as AICDA, through the repression of microRNAs expression, like miR155. An important function is to allow GC B-cells to proliferate very rapidly in response to T-cell dependent antigens and tolerate the physiological DNA breaks required for immunglobulin class switch recombination and somatic hypermutation without inducing a p53/TP53-dependent apoptotic response. In follicular helper CD4(+) T-cells (T(FH) cells), promotes the expression of T(FH)-related genes but inhibits the differentiation of T(H)1, T(H)2 and T(H)17 cells. Also required for the establishment and maintenance of immunological memory for both T- and B-cells. Suppresses macrophage proliferation through competition with STAT5 for STAT-binding motifs binding on certain target genes, such as CCL2 and CCND2. In response to genotoxic stress, controls cell cycle arrest in GC B-cells in both p53/TP53-dependedent and -independent manners. Besides, also controls neurogenesis through the alteration of the composition of NOTCH-dependent transcriptional complexes at selective NOTCH targets, such as HES5, including the recruitment of the deacetylase SIRT1 and resulting in an epigenetic silencing leading to neuronal differentiation. This chain is B-cell lymphoma 6 protein homolog (Bcl6), found in Mus musculus (Mouse).